A 239-amino-acid polypeptide reads, in one-letter code: Lactate utilization protein A (239 aa).

The protein belongs to the LutA/YkgE family.

In terms of biological role, is involved in L-lactate degradation and allows cells to grow with lactate as the sole carbon source. This is Lactate utilization protein A from Geobacillus kaustophilus (strain HTA426).